Here is a 1376-residue protein sequence, read N- to C-terminus: Ubiquitin carboxyl-terminal hydrolase 47 (1376 aa).

K122 carries the post-translational modification N6-acetyllysine. Residues 188-564 (VGLVNQAMTC…NAYMLIYRLK (377 aa)) enclose the USP domain. The Nucleophile role is filled by C197. Residues 426–452 (EKSPQTESCTDSGAENEGSCHSDQMSN) form a disordered region. The segment covering 430 to 452 (QTESCTDSGAENEGSCHSDQMSN) has biased composition (polar residues). H503 serves as the catalytic Proton acceptor. S832 is modified (phosphoserine). Disordered regions lie at residues 835 to 863 (SYSKRTAYQKAGGDSGNVDDDCERVKGPA), 880 to 971 (LKSL…SSDT), and 985 to 1025 (GLDS…ESGK). Positions 882–900 (SLSLQQQQQDGDNGDSSKS) are enriched in low complexity. 2 positions are modified to phosphoserine: S911 and S934. A compositionally biased stretch (polar residues) spans 930–939 (HIQTSDPENF). The span at 941 to 951 (SEERSDSDVNN) shows a compositional bias: basic and acidic residues. Over residues 954 to 970 (STSSVDSDILSSSHSSD) the composition is skewed to low complexity. Basic and acidic residues predominate over residues 998-1007 (KANEGKKETW). Positions 1008–1021 (DTAEEDSGTDSEYD) are enriched in acidic residues. S1014 is subject to Phosphoserine. Residue T1016 is modified to Phosphothreonine. S1018 carries the phosphoserine modification.

Belongs to the peptidase C19 family. USP47 subfamily. Interacts with BTRC and FBXW11. Interacts with POLB.

It is found in the cytoplasm. It carries out the reaction Thiol-dependent hydrolysis of ester, thioester, amide, peptide and isopeptide bonds formed by the C-terminal Gly of ubiquitin (a 76-residue protein attached to proteins as an intracellular targeting signal).. Its function is as follows. Ubiquitin-specific protease that specifically deubiquitinates monoubiquitinated DNA polymerase beta (POLB), stabilizing POLB thereby playing a role in base-excision repair (BER). Acts as a regulator of cell growth and genome integrity. May also indirectly regulate CDC25A expression at a transcriptional level. This is Ubiquitin carboxyl-terminal hydrolase 47 (Usp47) from Mus musculus (Mouse).